The sequence spans 2641 residues: CCR4-NOT transcription complex subunit let-711 (2641 aa).

Positions 660 to 664 (LSELL) match the LXXLL motif. Disordered stretches follow at residues 771–887 (SGRS…QNAQ), 936–963 (TQRQ…PQQQ), 1197–1221 (EGGR…PAAA), 1518–1565 (QSKI…SQGA), and 2034–2054 (GMNN…AGLQ). Composition is skewed to low complexity over residues 774 to 795 (SSSV…QQQQ), 802 to 839 (LPPS…SQQQ), and 853 to 877 (PAQF…HMMG). Residues 951-960 (PQRPSGPPTP) are compositionally biased toward pro residues. The segment covering 1205–1221 (GSAQAGSASSTPTPAAA) has biased composition (low complexity). A compositionally biased stretch (low complexity) spans 2034-2046 (GMNNAMNNGAGNA). An LXXLL motif is present at residues 2341–2345 (LRVLL). The disordered stretch occupies residues 2609–2641 (AQGSQPQAQPDGAPGPLGNNTGAANQQQNPNTN).

It belongs to the CNOT1 family. In terms of assembly, component of the CCR4-NOT complex at least composed of ccf-1, ccr-4 and let-711, which is required for germ cell development in hermaphrodites. Within the complex interacts with ccf-1 and ccr-4; the interactions are direct. Highly expressed in the germline of hermaphrodites.

The protein localises to the nucleus. Its function is as follows. Scaffolding component of the CCR4-NOT complex which is one of the major cellular mRNA deadenylases and is linked to various cellular processes including bulk mRNA degradation, miRNA-mediated repression, translational repression during translational initiation and general transcription regulation. Positively regulates the accumulation of the CCR4-NOT complex component ccr-1. Within the complex promotes germ cell development and fertility in hermaphrodites. Additional complex functions may be a consequence of its influence on mRNA expression. Its scaffolding function implies its interaction with the catalytic complex module and diverse RNA-binding proteins mediating the complex recruitment to selected mRNA 3'UTRs. Mediates the recruitment of the CCR4-NOT complex to miRNA targets and to the RISC complex. Acts as a transcriptional repressor. Represses the ligand-dependent transcriptional activation by nuclear receptors. In embryos, plays a role in female pronucleus and mitotic spindle positioning during the first cleavage divisions after fertilization. This may partly be through negatively regulating the accumulation of zyg-9 at the centrosome. Negatively regulates the formation of long astral microtubules in developing embryos. Required for the stabilization and degradation of maternal mRNAs such as nos-2 in somatic blastomeres. The protein is CCR4-NOT transcription complex subunit let-711 of Caenorhabditis elegans.